The sequence spans 166 residues: Lipoprotein signal peptidase (166 aa).

The next 4 membrane-spanning stretches (helical) occupy residues 11-31 (VWLW…TLVV), 42-62 (LLPV…SFLS), 67-87 (WQRW…VWWL), and 90-110 (LPAT…GAIG). Residues Asp123 and Asp141 contribute to the active site. Residues 133 to 153 (HFPVFNVADCAICIGAALLLF) traverse the membrane as a helical segment.

The protein belongs to the peptidase A8 family.

Its subcellular location is the cell inner membrane. The catalysed reaction is Release of signal peptides from bacterial membrane prolipoproteins. Hydrolyzes -Xaa-Yaa-Zaa-|-(S,diacylglyceryl)Cys-, in which Xaa is hydrophobic (preferably Leu), and Yaa (Ala or Ser) and Zaa (Gly or Ala) have small, neutral side chains.. It functions in the pathway protein modification; lipoprotein biosynthesis (signal peptide cleavage). Functionally, this protein specifically catalyzes the removal of signal peptides from prolipoproteins. The chain is Lipoprotein signal peptidase from Pseudoalteromonas translucida (strain TAC 125).